The primary structure comprises 122 residues: MAATIDEELKKAFTELQAKVIDTQQKARLADLQIDQLTKVQKHARLTQTEMASLPDNTRLYEGVGRMFILRSKEEINNHLTDAQKTADEKVKELEQKKVYLERSVKEAEDNIREMLMARRAQ.

Belongs to the prefoldin subunit beta family. As to quaternary structure, heterohexamer of two PFD-alpha type and four PFD-beta type subunits.

Functionally, binds specifically to cytosolic chaperonin (c-CPN) and transfers target proteins to it. Binds to nascent polypeptide chain and promotes folding in an environment in which there are many competing pathways for nonnative proteins. This is Prefoldin subunit 1 (pfdn1) from Tetraodon nigroviridis (Spotted green pufferfish).